Here is a 176-residue protein sequence, read N- to C-terminus: Large ribosomal subunit protein uL6 (176 aa).

The span at 151-170 shows a compositional bias: basic and acidic residues; the sequence is RPPEPYKGKGVRYADEQVRR. The tract at residues 151-176 is disordered; sequence RPPEPYKGKGVRYADEQVRRKEAKKK.

Belongs to the universal ribosomal protein uL6 family. Part of the 50S ribosomal subunit.

Functionally, this protein binds to the 23S rRNA, and is important in its secondary structure. It is located near the subunit interface in the base of the L7/L12 stalk, and near the tRNA binding site of the peptidyltransferase center. This is Large ribosomal subunit protein uL6 from Shewanella halifaxensis (strain HAW-EB4).